The sequence spans 588 residues: Aspartate--tRNA ligase (588 aa).

Residue Glu177 participates in L-aspartate binding. The aspartate stretch occupies residues Gln201–Lys204. An L-aspartate-binding site is contributed by Arg223. ATP is bound by residues Arg223 to Glu225 and Gln232. His451 contacts L-aspartate. An ATP-binding site is contributed by Glu485. L-aspartate is bound at residue Arg492. Gly537 to Arg540 is an ATP binding site.

This sequence belongs to the class-II aminoacyl-tRNA synthetase family. Type 1 subfamily. As to quaternary structure, homodimer.

Its subcellular location is the cytoplasm. It catalyses the reaction tRNA(Asp) + L-aspartate + ATP = L-aspartyl-tRNA(Asp) + AMP + diphosphate. In terms of biological role, catalyzes the attachment of L-aspartate to tRNA(Asp) in a two-step reaction: L-aspartate is first activated by ATP to form Asp-AMP and then transferred to the acceptor end of tRNA(Asp). This chain is Aspartate--tRNA ligase, found in Staphylococcus aureus (strain NCTC 8325 / PS 47).